The following is a 301-amino-acid chain: D-alanine--D-alanine ligase (301 aa).

One can recognise an ATP-grasp domain in the interval 99–293 (KRILAFGNVR…FEELLDTIIE (195 aa)). 126-181 (IENLGYPVFIKPNNGGSSVATTLVESKEAVKDAVLEALKYDTEVMIEEYIKGDEIT) contributes to the ATP binding site. Residues Asp248, Glu260, and Asn262 each contribute to the Mg(2+) site.

The protein belongs to the D-alanine--D-alanine ligase family. Mg(2+) serves as cofactor. It depends on Mn(2+) as a cofactor.

It localises to the cytoplasm. It carries out the reaction 2 D-alanine + ATP = D-alanyl-D-alanine + ADP + phosphate + H(+). The protein operates within cell wall biogenesis; peptidoglycan biosynthesis. Its function is as follows. Cell wall formation. The protein is D-alanine--D-alanine ligase of Clostridium perfringens (strain SM101 / Type A).